The primary structure comprises 336 residues: HTH-type transcriptional repressor PurR (336 aa).

The HTH lacI-type domain maps to 2–56 (ATIKDVAKLAGVSTTTVSHVINKTRFVAEDTSKAVWDAIQQLNYSPSAVARSLKV). The segment at residues 4–23 (IKDVAKLAGVSTTTVSHVIN) is a DNA-binding region (H-T-H motif). A DNA-binding region spans residues 48-56 (SAVARSLKV). The hypoxanthine site is built by tyrosine 73, lysine 188, phenylalanine 219, and aspartate 273.

In terms of assembly, homodimer.

The protein operates within purine metabolism; purine nucleotide biosynthesis [regulation]. Is the main repressor of the genes involved in the de novo synthesis of purine nucleotides, regulating purB, purC, purEK, purF, purHD, purL, purMN and guaBA expression. PurR is allosterically activated to bind its cognate DNA by binding the purine corepressors, hypoxanthine or guanine, thereby effecting transcription repression. This Actinobacillus pleuropneumoniae serotype 5b (strain L20) protein is HTH-type transcriptional repressor PurR.